The chain runs to 767 residues: MSGDHLHNDSQIEADFRLNDSHKHKDKHKDREHRHKEHKKDKDKDREKSKHSNSEHKDSEKKHKEKEKTKHKDGSSEKHKDKHKDRDKERRKEEKIRAAGDAKIKKEKENGFSSPPRIKDEPEDDGYFAPPKEDIKPLKRLRDEDDADYKPKKIKTEDIKKEKKRKSEEEEDGKLKKPKNKDKDKKVAEPDNKKKKPKKEEEQKWKWWEEERYPEGIKWKFLEHKGPVFAPPYEPLPESVKFYYDGKVMKLSPKAEEVATFFAKMLDHEYTTKEIFRKNFFKDWRKEMTNDEKNTITNLSKCDFTQMSQYFKAQSEARKQMSKEEKLKIKEENEKLLKEYGFCVMDNHRERIANFKIEPPGLFRGRGNHPKMGMLKRRIMPEDIIINCSKDAKVPSPPPGHKWKEVRHDNKVTWLVSWTENIQGSIKYIMLNPSSRIKGEKDWQKYETARRLKKCVDKIRNQYREDWKSKEMKVRQRAVALYFIDKLALRAGNEKEEGETADTVGCCSLRVEHINLHPELDGQEYVVEFDFPGKDSIRYYNKVPVEKRVFKNLQLFMENKQPEDDLFDRLNTGILNKHLQDLMEGLTAKVFRTYNASITLQQQLKELTAPDENVPAKILSYNRANRAVAILCNHQRAPPKTFEKSMMNLQSKIDAKKDQLADARRDLKSAKADAKVMKDAKTKKVVESKKKAVQRLEEQLMKLEVQATDREENKQIALGTSKLNYLDPRITVAWCKKWGVPIEKIYNKTQREKFAWAIDMTDEDYEF.

Positions 1–23 are enriched in basic and acidic residues; the sequence is MSGDHLHNDSQIEADFRLNDSHK. Residues 1 to 201 are disordered; sequence MSGDHLHNDS…NKKKKPKKEE (201 aa). Position 2 is an N-acetylserine (S2). Phosphoserine is present on residues S2 and S10. Basic residues predominate over residues 24–39; it reads HKDKHKDREHRHKEHK. Positions 40–110 are enriched in basic and acidic residues; that stretch reads KDKDKDREKS…DAKIKKEKEN (71 aa). Residue S59 is modified to Phosphoserine. A Glycyl lysine isopeptide (Lys-Gly) (interchain with G-Cter in SUMO2) cross-link involves residue K103. A Glycyl lysine isopeptide (Lys-Gly) (interchain with G-Cter in SUMO); alternate cross-link involves residue K105. A Glycyl lysine isopeptide (Lys-Gly) (interchain with G-Cter in SUMO2); alternate cross-link involves residue K105. A Phosphoserine modification is found at S114. K119 participates in a covalent cross-link: Glycyl lysine isopeptide (Lys-Gly) (interchain with G-Cter in SUMO); alternate. Residue K119 forms a Glycyl lysine isopeptide (Lys-Gly) (interchain with G-Cter in SUMO2); alternate linkage. Residue K119 forms a Glycyl lysine isopeptide (Lys-Gly) (interchain with G-Cter in SUMO1); alternate linkage. Positions 131-168 are enriched in basic and acidic residues; that stretch reads PKEDIKPLKRLRDEDDADYKPKKIKTEDIKKEKKRKSE. Residues K136 and K150 each participate in a glycyl lysine isopeptide (Lys-Gly) (interchain with G-Cter in SUMO2) cross-link. Residue K155 forms a Glycyl lysine isopeptide (Lys-Gly) (interchain with G-Cter in SUMO); alternate linkage. K155 is covalently cross-linked (Glycyl lysine isopeptide (Lys-Gly) (interchain with G-Cter in SUMO2); alternate). Glycyl lysine isopeptide (Lys-Gly) (interchain with G-Cter in SUMO2) cross-links involve residues K160 and K166. K174 participates in a covalent cross-link: Glycyl lysine isopeptide (Lys-Gly) (interchain with G-Cter in SUMO2); alternate. An N6-acetyllysine; alternate modification is found at K174. Positions 181-201 are enriched in basic and acidic residues; sequence KDKDKKVAEPDNKKKKPKKEE. K206 is covalently cross-linked (Glycyl lysine isopeptide (Lys-Gly) (interchain with G-Cter in SUMO2)). Residue K282 is modified to N6-acetyllysine. K338 participates in a covalent cross-link: Glycyl lysine isopeptide (Lys-Gly) (interchain with G-Cter in SUMO2). 2 interaction with DNA regions span residues 427-428 and 490-495; these read KY and RAGNEK. The region spanning 434–767 is the Topo IB-type catalytic domain; it reads SSRIKGEKDW…IDMTDEDYEF (334 aa). S508 carries the phosphoserine; by CK2 modification. K551 participates in a covalent cross-link: Glycyl lysine isopeptide (Lys-Gly) (interchain with G-Cter in SUMO2). The interaction with DNA stretch occupies residues 587–589; that stretch reads TAK. Glycyl lysine isopeptide (Lys-Gly) (interchain with G-Cter in SUMO2) cross-links involve residues K644, K702, and K714. The O-(3'-phospho-DNA)-tyrosine intermediate role is filled by Y725.

This sequence belongs to the type IB topoisomerase family. As to quaternary structure, monomer. Interacts with ERCC6. Interacts with TPRN; TPRN interacts with a number of DNA damage response proteins, is recruited to sites of DNA damage and may play a role in DNA damage repair. Sumoylated. Lys-119 is the main site of sumoylation. Sumoylation plays a role in partitioning TOP1 between nucleoli and nucleoplasm. Levels are dramatically increased on camptothecin (CPT) treatment. In terms of processing, phosphorylation at Ser-508 by CK2 increases binding to supercoiled DNA and sensitivity to camptothecin.

It is found in the nucleus. It localises to the nucleolus. The protein resides in the nucleoplasm. The enzyme catalyses ATP-independent breakage of single-stranded DNA, followed by passage and rejoining.. Releases the supercoiling and torsional tension of DNA introduced during the DNA replication and transcription by transiently cleaving and rejoining one strand of the DNA duplex. Introduces a single-strand break via transesterification at a target site in duplex DNA. The scissile phosphodiester is attacked by the catalytic tyrosine of the enzyme, resulting in the formation of a DNA-(3'-phosphotyrosyl)-enzyme intermediate and the expulsion of a 5'-OH DNA strand. The free DNA strand then rotates around the intact phosphodiester bond on the opposing strand, thus removing DNA supercoils. Finally, in the religation step, the DNA 5'-OH attacks the covalent intermediate to expel the active-site tyrosine and restore the DNA phosphodiester backbone. Regulates the alternative splicing of tissue factor (F3) pre-mRNA in endothelial cells. Involved in the circadian transcription of the core circadian clock component BMAL1 by altering the chromatin structure around the ROR response elements (ROREs) on the BMAL1 promoter. The chain is DNA topoisomerase 1 (Top1) from Mus musculus (Mouse).